The primary structure comprises 99 residues: Duplicate procyclin (99 aa).

In Trypanosoma brucei brucei, this protein is Duplicate procyclin.